Here is a 1184-residue protein sequence, read N- to C-terminus: Protocadherin-12 (1184 aa).

The signal sequence occupies residues 1–24 (MMQLLQLLLGLLGPGGYLFLLGDC). Residues 25–718 (QEVTTLTVKY…PGALSMSMLT (694 aa)) lie on the Extracellular side of the membrane. 5 consecutive Cadherin domains span residues 28–135 (TTLT…QPRF), 136–244 (PKGE…SPAF), 245–352 (AESS…IPSI), 355–460 (TWAS…APVF), and 461–565 (EKSR…APEV). A glycan (N-linked (GlcNAc...) asparagine) is linked at asparagine 415. N-linked (GlcNAc...) asparagine glycans are attached at residues asparagine 582, asparagine 659, and asparagine 662. A Cadherin 6 domain is found at 600 to 711 (PAGTDTPPLA…LRDSARKPGA (112 aa)). A helical membrane pass occupies residues 719–739 (VICLAVLLGIFGLILALFMSI). Residues 740–1184 (CRTEKKDNRA…RGSSSSSRCL (445 aa)) lie on the Cytoplasmic side of the membrane. Disordered stretches follow at residues 854–928 (RQRN…ESGP) and 973–1023 (QFQP…DPEE). Serine 859 carries the phosphoserine modification. Acidic residues predominate over residues 1012 to 1023 (PEQEEGPLDPEE). Residue serine 1062 is modified to Phosphoserine. The tract at residues 1153 to 1184 (SAASGMKVQGDPGGKTGTEGKSRGSSSSSRCL) is disordered. The span at 1175 to 1184 (RGSSSSSRCL) shows a compositional bias: low complexity.

In terms of processing, cleaved by ADAM10 close to the transmembrane domain to release the Protocadherin-12, secreted form in the serum. Cleavage results in reduced cellular adhesion in a cell migration assay. As to expression, expressed in highly vascularized tissues including the heart and placenta, but most tissues contain a low level of expression. Prominent expression in the spleen. Present in villous and extravillous trophoblast (at protein level).

Its subcellular location is the cell membrane. It is found in the cell junction. The protein resides in the secreted. In terms of biological role, cellular adhesion molecule that may play an important role in cell-cell interactions at interendothelial junctions. Acts as a regulator of cell migration, probably via increasing cell-cell adhesion. Promotes homotypic calcium-dependent aggregation and adhesion and clusters at intercellular junctions. Unable to bind to catenins, weakly associates with the cytoskeleton. This chain is Protocadherin-12, found in Homo sapiens (Human).